The sequence spans 212 residues: Holliday junction branch migration complex subunit RuvA (212 aa).

The interval 1 to 63 is domain I; it reads MIAKLKGLID…EDAISLFGFL (63 aa). The domain II stretch occupies residues 64–142; it reads ETGERDWFRL…KIALGGFSPG (79 aa). The flexible linker stretch occupies residues 143 to 155; sequence GIKDALSASAPLP. The domain III stretch occupies residues 156-212; it reads AASGRMEDAVSALVNLGYKRLEAFQAVGETARELGDEADSSALIRAALKHLGKGLLG.

The protein belongs to the RuvA family. In terms of assembly, homotetramer. Forms an RuvA(8)-RuvB(12)-Holliday junction (HJ) complex. HJ DNA is sandwiched between 2 RuvA tetramers; dsDNA enters through RuvA and exits via RuvB. An RuvB hexamer assembles on each DNA strand where it exits the tetramer. Each RuvB hexamer is contacted by two RuvA subunits (via domain III) on 2 adjacent RuvB subunits; this complex drives branch migration. In the full resolvosome a probable DNA-RuvA(4)-RuvB(12)-RuvC(2) complex forms which resolves the HJ.

The protein localises to the cytoplasm. Its function is as follows. The RuvA-RuvB-RuvC complex processes Holliday junction (HJ) DNA during genetic recombination and DNA repair, while the RuvA-RuvB complex plays an important role in the rescue of blocked DNA replication forks via replication fork reversal (RFR). RuvA specifically binds to HJ cruciform DNA, conferring on it an open structure. The RuvB hexamer acts as an ATP-dependent pump, pulling dsDNA into and through the RuvAB complex. HJ branch migration allows RuvC to scan DNA until it finds its consensus sequence, where it cleaves and resolves the cruciform DNA. The protein is Holliday junction branch migration complex subunit RuvA of Paramagnetospirillum magneticum (strain ATCC 700264 / AMB-1) (Magnetospirillum magneticum).